The primary structure comprises 281 residues: Bifunctional protein FolD (281 aa).

Residues 164–166 (GRS), serine 189, and isoleucine 230 contribute to the NADP(+) site.

Belongs to the tetrahydrofolate dehydrogenase/cyclohydrolase family. In terms of assembly, homodimer.

It catalyses the reaction (6R)-5,10-methylene-5,6,7,8-tetrahydrofolate + NADP(+) = (6R)-5,10-methenyltetrahydrofolate + NADPH. It carries out the reaction (6R)-5,10-methenyltetrahydrofolate + H2O = (6R)-10-formyltetrahydrofolate + H(+). It functions in the pathway one-carbon metabolism; tetrahydrofolate interconversion. In terms of biological role, catalyzes the oxidation of 5,10-methylenetetrahydrofolate to 5,10-methenyltetrahydrofolate and then the hydrolysis of 5,10-methenyltetrahydrofolate to 10-formyltetrahydrofolate. The sequence is that of Bifunctional protein FolD from Pelagibacter ubique (strain HTCC1062).